The primary structure comprises 287 residues: UPF0761 membrane protein MS0032 (287 aa).

A run of 6 helical transmembrane segments spans residues 37–57 (MLAI…FPMF), 93–113 (SMSA…INQI), 128–148 (FIFS…FIGM), 174–194 (LLSF…YTLV), 204–224 (AAVG…AFAW), and 238–258 (AMAT…FILL).

The protein belongs to the UPF0761 family.

It is found in the cell inner membrane. This Mannheimia succiniciproducens (strain KCTC 0769BP / MBEL55E) protein is UPF0761 membrane protein MS0032.